A 216-amino-acid polypeptide reads, in one-letter code: Uracil phosphoribosyltransferase (216 aa).

GTP contacts are provided by residues R30, R39, 73 to 76 (ASKI), and K75. R83 serves as a coordination point for 5-phospho-alpha-D-ribose 1-diphosphate. Residue K100 participates in GTP binding. R108 lines the 5-phospho-alpha-D-ribose 1-diphosphate pocket. Position 129 (R129) interacts with GTP. 5-phospho-alpha-D-ribose 1-diphosphate-binding positions include D135 and 135 to 143 (DPMLATGGT). Y199 is a binding site for D-ribose 5-phosphate. Uracil contacts are provided by residues I200 and 205–207 (GDF). D206 lines the 5-phospho-alpha-D-ribose 1-diphosphate pocket.

The protein belongs to the UPRTase family. The cofactor is Mg(2+).

The catalysed reaction is UMP + diphosphate = 5-phospho-alpha-D-ribose 1-diphosphate + uracil. The protein operates within pyrimidine metabolism; UMP biosynthesis via salvage pathway; UMP from uracil: step 1/1. Its activity is regulated as follows. Allosterically activated by GTP. In terms of biological role, catalyzes the conversion of uracil and 5-phospho-alpha-D-ribose 1-diphosphate (PRPP) to UMP and diphosphate. The polypeptide is Uracil phosphoribosyltransferase (uprt) (Dictyostelium discoideum (Social amoeba)).